We begin with the raw amino-acid sequence, 1405 residues long: DNA-directed RNA polymerase subunit beta' (1405 aa).

Zn(2+) contacts are provided by Cys-70, Cys-72, Cys-85, and Cys-88. Mg(2+) is bound by residues Asp-460, Asp-462, and Asp-464. Zn(2+)-binding residues include Cys-814, Cys-888, Cys-895, and Cys-898.

It belongs to the RNA polymerase beta' chain family. As to quaternary structure, the RNAP catalytic core consists of 2 alpha, 1 beta, 1 beta' and 1 omega subunit. When a sigma factor is associated with the core the holoenzyme is formed, which can initiate transcription. Mg(2+) serves as cofactor. It depends on Zn(2+) as a cofactor.

The enzyme catalyses RNA(n) + a ribonucleoside 5'-triphosphate = RNA(n+1) + diphosphate. Its function is as follows. DNA-dependent RNA polymerase catalyzes the transcription of DNA into RNA using the four ribonucleoside triphosphates as substrates. This Wigglesworthia glossinidia brevipalpis protein is DNA-directed RNA polymerase subunit beta'.